The chain runs to 486 residues: Glutamyl-tRNA(Gln) amidotransferase subunit A (486 aa).

Active-site charge relay system residues include K78 and S153. S177 serves as the catalytic Acyl-ester intermediate.

Belongs to the amidase family. GatA subfamily. As to quaternary structure, heterotrimer of A, B and C subunits.

The enzyme catalyses L-glutamyl-tRNA(Gln) + L-glutamine + ATP + H2O = L-glutaminyl-tRNA(Gln) + L-glutamate + ADP + phosphate + H(+). Its function is as follows. Allows the formation of correctly charged Gln-tRNA(Gln) through the transamidation of misacylated Glu-tRNA(Gln) in organisms which lack glutaminyl-tRNA synthetase. The reaction takes place in the presence of glutamine and ATP through an activated gamma-phospho-Glu-tRNA(Gln). The sequence is that of Glutamyl-tRNA(Gln) amidotransferase subunit A from Ruminiclostridium cellulolyticum (strain ATCC 35319 / DSM 5812 / JCM 6584 / H10) (Clostridium cellulolyticum).